The following is a 282-amino-acid chain: S-formylglutathione hydrolase (282 aa).

Alanine 2 is modified (N-acetylalanine). Lysine 4 carries the N6-succinyllysine modification. The Charge relay system role is filled by serine 149. Lysine 200 is modified (N6-acetyllysine). Catalysis depends on charge relay system residues aspartate 226 and histidine 260.

The protein belongs to the esterase D family. Homodimer.

It is found in the cytoplasm. It localises to the cytoplasmic vesicle. It carries out the reaction S-formylglutathione + H2O = formate + glutathione + H(+). Its function is as follows. Serine hydrolase involved in the detoxification of formaldehyde. The sequence is that of S-formylglutathione hydrolase (Esd) from Mus musculus (Mouse).